The primary structure comprises 330 residues: Type II methyltransferase M.HaeIII (330 aa).

Residues 1–327 (MNLISLFSGA…KTIKSALEIC (327 aa)) enclose the SAM-dependent MTase C5-type domain. Residues E29 and 50–51 (DI) contribute to the ATP site. C71 is an active-site residue. Position 260 (N260) interacts with ATP.

This sequence belongs to the class I-like SAM-binding methyltransferase superfamily. C5-methyltransferase family. In terms of assembly, monomer.

It carries out the reaction a 2'-deoxycytidine in DNA + S-adenosyl-L-methionine = a 5-methyl-2'-deoxycytidine in DNA + S-adenosyl-L-homocysteine + H(+). Functionally, a methylase, recognizes the double-stranded sequence 5'-GGCC-3', methylates C-3 on both strands, and protects the DNA from cleavage by the HaeIII endonuclease. This Haemophilus aegyptius protein is Type II methyltransferase M.HaeIII (haeIIIM).